A 155-amino-acid chain; its full sequence is Small ribosomal subunit protein uS7cz/uS7cy (155 aa).

It belongs to the universal ribosomal protein uS7 family. Part of the 30S ribosomal subunit.

It localises to the plastid. The protein resides in the chloroplast. Its function is as follows. One of the primary rRNA binding proteins, it binds directly to 16S rRNA where it nucleates assembly of the head domain of the 30S subunit. The chain is Small ribosomal subunit protein uS7cz/uS7cy (rps7-A) from Citrus sinensis (Sweet orange).